The sequence spans 62 residues: Large ribosomal subunit protein uL29 (62 aa).

This sequence belongs to the universal ribosomal protein uL29 family.

The sequence is that of Large ribosomal subunit protein uL29 from Syntrophotalea carbinolica (strain DSM 2380 / NBRC 103641 / GraBd1) (Pelobacter carbinolicus).